The following is a 259-amino-acid chain: UPF0246 protein Avin_11220 (259 aa).

The protein belongs to the UPF0246 family.

The chain is UPF0246 protein Avin_11220 from Azotobacter vinelandii (strain DJ / ATCC BAA-1303).